The sequence spans 97 residues: Large ribosomal subunit protein uL23 (97 aa).

The protein belongs to the universal ribosomal protein uL23 family. As to quaternary structure, part of the 50S ribosomal subunit. Contacts protein L29, and trigger factor when it is bound to the ribosome.

Its function is as follows. One of the early assembly proteins it binds 23S rRNA. One of the proteins that surrounds the polypeptide exit tunnel on the outside of the ribosome. Forms the main docking site for trigger factor binding to the ribosome. The polypeptide is Large ribosomal subunit protein uL23 (Brucella melitensis biotype 2 (strain ATCC 23457)).